The sequence spans 468 residues: uncharacterized protein (468 aa).

Helical transmembrane passes span 59–79 (IPIVIIAVIYSSFIFFFALFI), 135–155 (TWINSILEILALIYSFLLLLV), 215–235 (VFPFTPCPLPLLLFPIFLSIL), 297–317 (THCCLNVFASSAFFVLLMVLV), 348–368 (HFIPLILTVVIELVITGLVSY), and 385–405 (VFTVMFTIIAVFRFVFIIILF).

It is found in the membrane. This is an uncharacterized protein from Caenorhabditis elegans.